The primary structure comprises 259 residues: GEM-like protein 1 (259 aa).

The span at 1–11 (MSGQENHDHGR) shows a compositional bias: basic and acidic residues. The interval 1–79 (MSGQENHDHG…PSPAPRNTMD (79 aa)) is disordered. Residues 13–30 (SSTPAAASEPSKAAAHSS) show a composition bias toward low complexity. In terms of domain architecture, GRAM spans 138–215 (KVFKQTFDCL…NQLKAVNPST (78 aa)).

This sequence belongs to the GEM family. As to quaternary structure, interacts with AFH1.

This is GEM-like protein 1 (FIP1) from Arabidopsis thaliana (Mouse-ear cress).